The chain runs to 63 residues: Large ribosomal subunit protein bL28 (63 aa).

This sequence belongs to the bacterial ribosomal protein bL28 family.

The sequence is that of Large ribosomal subunit protein bL28 from Heliobacterium modesticaldum (strain ATCC 51547 / Ice1).